The chain runs to 60 residues: UPF0181 protein PMI1604 (60 aa).

This sequence belongs to the UPF0181 family.

In Proteus mirabilis (strain HI4320), this protein is UPF0181 protein PMI1604.